A 333-amino-acid chain; its full sequence is Catabolite control protein A (333 aa).

In terms of domain architecture, HTH lacI-type spans 7 to 61 (ITIYDVAREAGVSMATVSRVVNGNKNVKENTRKKVLEVIDRLDYRPNAVARGLAS). The H-T-H motif DNA-binding region spans 9–28 (IYDVAREAGVSMATVSRVVN).

Its function is as follows. Global transcriptional regulator of carbon catabolite repression (CCR) and carbon catabolite activation (CCA), which ensures optimal energy usage under diverse conditions. This chain is Catabolite control protein A (ccpA), found in Streptococcus mutans serotype c (strain ATCC 700610 / UA159).